The chain runs to 245 residues: Probable phosphatase YcdX (245 aa).

9 residues coordinate Zn(2+): histidine 7, histidine 9, histidine 15, histidine 40, glutamate 73, histidine 101, histidine 131, aspartate 192, and histidine 194.

The protein belongs to the PHP family. As to quaternary structure, homotrimer. Zn(2+) serves as cofactor.

This is Probable phosphatase YcdX from Escherichia coli O127:H6 (strain E2348/69 / EPEC).